The primary structure comprises 522 residues: Protein DETOXIFICATION 31 (522 aa).

12 consecutive transmembrane segments (helical) span residues 89–109, 113–133, 154–174, 183–203, 217–237, 249–269, 299–319, 324–344, 371–391, 415–435, 441–461, and 471–491; these read GAVTQVFAGHISTLALAAVSI, VIAGFSFGIMLGMGSALETLC, VILSVTALFLSLIYIFAAPIL, ISAMAGIFSIYMIPQIFAYAI, IMVMAGISGVVLVIHSFFTWL, LALVLNTSWWVIVVAQLVYIF, AAMLCLEIWYFMALVLFAGYL, VSVAALSICMNILGWAAMVAF, VVAVILSTAIGMFIAAGLLFF, MLAFCIVINNVQPVLSGVAVG, VVAYVNIACYYLFGVPFGLLL, and GIWWGMVTGTFVQSIVLTWMI.

This sequence belongs to the multi antimicrobial extrusion (MATE) (TC 2.A.66.1) family.

Its subcellular location is the membrane. Its function is as follows. Positively mediates root hair elongation. The polypeptide is Protein DETOXIFICATION 31 (Arabidopsis thaliana (Mouse-ear cress)).